The sequence spans 331 residues: Type 2 lactosamine alpha-2,3-sialyltransferase (331 aa).

The Cytoplasmic segment spans residues 1 to 4 (MRGY). A helical; Signal-anchor for type II membrane protein membrane pass occupies residues 5–25 (LVAIFLSAVFLYYVLHCILWG). The Lumenal portion of the chain corresponds to 26–331 (TNVYWVAPVE…KNLVINLTQD (306 aa)). 6 N-linked (GlcNAc...) asparagine glycosylation sites follow: N129, N181, N282, N295, N308, and N327.

The protein belongs to the glycosyltransferase 29 family.

The protein resides in the golgi apparatus membrane. The catalysed reaction is a neolactoside nLc4Cer(d18:1(4E)) + CMP-N-acetyl-beta-neuraminate = a neolactoside IV(3)-alpha-NeuAc-nLc4Cer(d18:1(4E)) + CMP + H(+). The enzyme catalyses a beta-D-galactosyl-(1-&gt;4)-N-acetyl-beta-D-glucosaminyl derivative + CMP-N-acetyl-beta-neuraminate = an N-acetyl-alpha-neuraminyl-(2-&gt;3)-beta-D-galactosyl-(1-&gt;4)-N-acetyl-beta-D-glucosaminyl derivative + CMP + H(+). It carries out the reaction a neolactoside nLc6Cer(d18:1(4E)) + CMP-N-acetyl-beta-neuraminate = a neolactoside VI(3)-alpha-NeuNAc-nLc6Cer(d18:1(4E)) + CMP + H(+). Functionally, transfers the sialyl residue from CMP-N-acetyl-beta-neuraminate to the terminal galactose residue on sugar chains of glycoproteins and glycolipids. It's alpha-2,3-sialyltransferase activity is specific toward type II glycan chains (Galbeta1-4GlcNAc) on glycoproteins and glycolipids such as neolactosides nLc4Cer and nLc6Cer, whose sialyl-products serve as precursors for the Lewis X antigen. Critically involved in the synthesis of functional selectin ligands needed for neutrophil recruitment during inflammation and lymphocyte homing to the lymph nodes. The sequence is that of Type 2 lactosamine alpha-2,3-sialyltransferase (ST3GAL6) from Pan troglodytes (Chimpanzee).